The chain runs to 206 residues: Large ribosomal subunit protein uL4 (206 aa).

Belongs to the universal ribosomal protein uL4 family. Part of the 50S ribosomal subunit.

In terms of biological role, one of the primary rRNA binding proteins, this protein initially binds near the 5'-end of the 23S rRNA. It is important during the early stages of 50S assembly. It makes multiple contacts with different domains of the 23S rRNA in the assembled 50S subunit and ribosome. Functionally, forms part of the polypeptide exit tunnel. In Bradyrhizobium sp. (strain ORS 278), this protein is Large ribosomal subunit protein uL4.